Reading from the N-terminus, the 312-residue chain is Serine/threonine-protein phosphatase PP2A catalytic subunit (312 aa).

D60, H62, D88, and N120 together coordinate Mn(2+). H121 serves as the catalytic Proton donor. Residues H170 and H244 each contribute to the Mn(2+) site.

This sequence belongs to the PPP phosphatase family. PP-2A subfamily. Mn(2+) is required as a cofactor.

It localises to the cytoplasm. The enzyme catalyses O-phospho-L-seryl-[protein] + H2O = L-seryl-[protein] + phosphate. It catalyses the reaction O-phospho-L-threonyl-[protein] + H2O = L-threonyl-[protein] + phosphate. The chain is Serine/threonine-protein phosphatase PP2A catalytic subunit from Nicotiana tabacum (Common tobacco).